Reading from the N-terminus, the 313-residue chain is Aspartate carbamoyltransferase catalytic subunit (313 aa).

The carbamoyl phosphate site is built by Arg-59 and Thr-60. Position 87 (Lys-87) interacts with L-aspartate. Residues Arg-109, His-137, and Gln-140 each contribute to the carbamoyl phosphate site. Arg-170 and Arg-224 together coordinate L-aspartate. The carbamoyl phosphate site is built by Gly-265 and Pro-266.

It belongs to the aspartate/ornithine carbamoyltransferase superfamily. ATCase family. As to quaternary structure, heterododecamer (2C3:3R2) of six catalytic PyrB chains organized as two trimers (C3), and six regulatory PyrI chains organized as three dimers (R2).

It carries out the reaction carbamoyl phosphate + L-aspartate = N-carbamoyl-L-aspartate + phosphate + H(+). Its pathway is pyrimidine metabolism; UMP biosynthesis via de novo pathway; (S)-dihydroorotate from bicarbonate: step 2/3. Catalyzes the condensation of carbamoyl phosphate and aspartate to form carbamoyl aspartate and inorganic phosphate, the committed step in the de novo pyrimidine nucleotide biosynthesis pathway. The sequence is that of Aspartate carbamoyltransferase catalytic subunit from Sinorhizobium medicae (strain WSM419) (Ensifer medicae).